Reading from the N-terminus, the 160-residue chain is NAD(P)H-quinone oxidoreductase subunit I, chloroplastic (160 aa).

4Fe-4S ferredoxin-type domains follow at residues 55-84 (GRIH…VDWK) and 95-124 (LNYS…MTEE). The [4Fe-4S] cluster site is built by Cys64, Cys67, Cys70, Cys74, Cys104, Cys107, Cys110, and Cys114.

Belongs to the complex I 23 kDa subunit family. In terms of assembly, NDH is composed of at least 16 different subunits, 5 of which are encoded in the nucleus. It depends on [4Fe-4S] cluster as a cofactor.

The protein localises to the plastid. Its subcellular location is the chloroplast thylakoid membrane. It catalyses the reaction a plastoquinone + NADH + (n+1) H(+)(in) = a plastoquinol + NAD(+) + n H(+)(out). It carries out the reaction a plastoquinone + NADPH + (n+1) H(+)(in) = a plastoquinol + NADP(+) + n H(+)(out). NDH shuttles electrons from NAD(P)H:plastoquinone, via FMN and iron-sulfur (Fe-S) centers, to quinones in the photosynthetic chain and possibly in a chloroplast respiratory chain. The immediate electron acceptor for the enzyme in this species is believed to be plastoquinone. Couples the redox reaction to proton translocation, and thus conserves the redox energy in a proton gradient. This is NAD(P)H-quinone oxidoreductase subunit I, chloroplastic from Cucumis sativus (Cucumber).